The primary structure comprises 505 residues: Aspartyl/glutamyl-tRNA(Asn/Gln) amidotransferase subunit B (505 aa).

The protein belongs to the GatB/GatE family. GatB subfamily. Heterotrimer of A, B and C subunits.

The enzyme catalyses L-glutamyl-tRNA(Gln) + L-glutamine + ATP + H2O = L-glutaminyl-tRNA(Gln) + L-glutamate + ADP + phosphate + H(+). The catalysed reaction is L-aspartyl-tRNA(Asn) + L-glutamine + ATP + H2O = L-asparaginyl-tRNA(Asn) + L-glutamate + ADP + phosphate + 2 H(+). Its function is as follows. Allows the formation of correctly charged Asn-tRNA(Asn) or Gln-tRNA(Gln) through the transamidation of misacylated Asp-tRNA(Asn) or Glu-tRNA(Gln) in organisms which lack either or both of asparaginyl-tRNA or glutaminyl-tRNA synthetases. The reaction takes place in the presence of glutamine and ATP through an activated phospho-Asp-tRNA(Asn) or phospho-Glu-tRNA(Gln). This is Aspartyl/glutamyl-tRNA(Asn/Gln) amidotransferase subunit B from Corynebacterium jeikeium (strain K411).